The chain runs to 1161 residues: Lateral signaling target protein 2 homolog (1161 aa).

Disordered regions lie at residues alanine 417–aspartate 510, alanine 583–serine 831, methionine 890–proline 918, aspartate 935–serine 978, serine 992–glutamate 1014, and glycine 1029–arginine 1095. The segment covering glycine 419 to glycine 429 has biased composition (gly residues). Basic residues predominate over residues proline 438–proline 453. The span at glycine 468–isoleucine 487 shows a compositional bias: basic and acidic residues. Residues glutamate 488 to aspartate 510 show a composition bias toward acidic residues. A compositionally biased stretch (low complexity) spans alanine 583–serine 601. Over residues serine 669 to aspartate 704 the composition is skewed to acidic residues. Residues lysine 728–arginine 742 show a composition bias toward basic residues. Over residues proline 743 to lysine 757 the composition is skewed to low complexity. Residues serine 758–histidine 773 are compositionally biased toward basic residues. Composition is skewed to low complexity over residues glycine 781 to serine 800 and methionine 807 to serine 831. Residues glutamate 896 to serine 910 show a composition bias toward acidic residues. 2 stretches are compositionally biased toward polar residues: residues aspartate 935–tyrosine 948 and glutamate 956–serine 967. The segment covering glycine 996–arginine 1010 has biased composition (gly residues). Low complexity predominate over residues serine 1054–asparagine 1065. Residues threonine 1081 to proline 1094 show a composition bias toward basic and acidic residues. The FYVE-type zinc finger occupies aspartate 1099–valine 1159. Residues cysteine 1105, cysteine 1108, cysteine 1121, cysteine 1124, cysteine 1129, cysteine 1132, cysteine 1151, and cysteine 1154 each contribute to the Zn(2+) site.

This sequence belongs to the lst-2 family.

Negative regulator of epidermal growth factor receptor (EGFR) signaling. This chain is Lateral signaling target protein 2 homolog, found in Anopheles gambiae (African malaria mosquito).